The chain runs to 861 residues: MASKYSVTLAAEDGYSAAFRGFAEAAEQMQENIRGHQAELRELNRLGRQMDGYQSLQGDLAATAAALDDAREKQARLSREMREAEEPSRRLQNEYDKATATVAGLSAEHRSQSNELDRLQGSLEEAGVDLSRFADEQRRIEEATRQTNSVLEDQRARMQAVSDAQARVTAAEGRVAANREARSQLRGEMVETLALGYLASRPMNSAMDMETSMADVAKVISFAEGEREQYANANLRLASDRLIASSGIRGTDIADIQYAAGQSGIFNEMEGQERFDGVMEFTRQAAIMAAAFDVSAGDAGSAMVSWRQGMNLDGDQALQLADATNHLGNNFNTTAADLTELLVRQGSVATTAGLSAEQAAALGAAFLNPGTQREVAATGFKNFILRINQGAATTDKRREQWNALGFEPEELARRMQVEAPTVIREVLQAIRAAPADEQSAITETLFGTESIGAISPLLVNLDAVDKAFNEVSDTARYSGSMLREAEGVADTSRTTWNVXTAEVARLVTQVGNGMLPVFEAVAPPVTAVIGYMADFTEANTELVGALAAGAAGLVAVKAAVLGVRYASLLIGQVGNQGALMRARLDQRTAQTALAADGAVGRLNAAINRLGGGAAGGGRNQRGNGSAAAGAAGAAGAAGAAGAAGAAGAAGAASRAAPGVQNGWRAWAANVGNSRAGQVAGKVALPVALTAGAIGVANAVGGGDAADVGSTAGGLVGGMGGFGGLMRQQMALGEEFVFSLGSGFPYSSLQRRSDGGWIEIDITYASPSSQNTGQALEQIRLSGTAFYAAGMQRLDELRAMQSERRPYVLVDGLGNNLGRWKIMSVEEQQTRVIDDGTAMKVAWVLQLEEFVDDAASSDDDSG.

The stretch at 20–127 (RGFAEAAEQM…RLQGSLEEAG (108 aa)) forms a coiled coil.

This sequence belongs to the P2likevirus tape measure protein family.

Its function is as follows. Serves as a base for tail tube protein polymerization and acts as a template for tail length determination. In Vreelandella aquamarina (Bacteriophage phiHAP-1), this protein is Probable tape measure protein.